The chain runs to 198 residues: Outer-membrane lipoprotein carrier protein (198 aa).

The N-terminal stretch at Met1 to Ala17 is a signal peptide.

The protein belongs to the LolA family. In terms of assembly, monomer.

The protein localises to the periplasm. In terms of biological role, participates in the translocation of lipoproteins from the inner membrane to the outer membrane. Only forms a complex with a lipoprotein if the residue after the N-terminal Cys is not an aspartate (The Asp acts as a targeting signal to indicate that the lipoprotein should stay in the inner membrane). The protein is Outer-membrane lipoprotein carrier protein of Aliivibrio salmonicida (strain LFI1238) (Vibrio salmonicida (strain LFI1238)).